Consider the following 438-residue polypeptide: Thymidine phosphorylase (438 aa).

The protein belongs to the thymidine/pyrimidine-nucleoside phosphorylase family. In terms of assembly, homodimer.

It catalyses the reaction thymidine + phosphate = 2-deoxy-alpha-D-ribose 1-phosphate + thymine. The protein operates within pyrimidine metabolism; dTMP biosynthesis via salvage pathway; dTMP from thymine: step 1/2. Its function is as follows. The enzymes which catalyze the reversible phosphorolysis of pyrimidine nucleosides are involved in the degradation of these compounds and in their utilization as carbon and energy sources, or in the rescue of pyrimidine bases for nucleotide synthesis. The protein is Thymidine phosphorylase of Burkholderia orbicola (strain MC0-3).